The primary structure comprises 34 residues: Voltage sensor toxin 3 (34 aa).

3 disulfide bridges follow: cysteine 2-cysteine 17, cysteine 9-cysteine 22, and cysteine 16-cysteine 29.

This sequence belongs to the neurotoxin 10 (Hwtx-1) family. 61 (VSTX3) subfamily. As to expression, expressed by the venom gland.

Its subcellular location is the secreted. In terms of biological role, potent voltage-gated sodium channel blocker (IC(50)=190 nM and 210 nM on human and rat Nav1.3/SCN3A respectively, 430 nM on human Nav1.7/SCN9A, 770 nM and 290 nM on human and rat Nav1.8/SCN10A, respectively). Binds the voltage-sensor domain of the potassium channel KvAP (from Aeropyrum pernix) and weakly inhibits this channel. In Grammostola rosea (Chilean rose tarantula), this protein is Voltage sensor toxin 3.